Reading from the N-terminus, the 160-residue chain is G-protein-signaling modulator 3 (160 aa).

The disordered stretch occupies residues 1–55; the sequence is MEAERPQEEEDGEQGPPQDEEGWPPPNSTTRPWRSAPPSPPPPGTRHTALGPRSA. Over residues 7–22 the composition is skewed to acidic residues; the sequence is QEEEDGEQGPPQDEEG. Residues Ser-35, Ser-39, Ser-56, and Ser-59 each carry the phosphoserine modification. Residues 35–44 are compositionally biased toward pro residues; it reads SAPPSPPPPG. A Phosphothreonine modification is found at Thr-62. GoLoco domains lie at 62 to 84, 104 to 126, and 132 to 155; these read TELL…RATF, REQL…RSEP, and GQEL…RSRP.

In terms of tissue distribution, expressed in heart, placenta, lung and liver.

The protein resides in the cytoplasm. In terms of biological role, interacts with subunit of G(i) alpha proteins and regulates the activation of G(i) alpha proteins. The protein is G-protein-signaling modulator 3 (GPSM3) of Homo sapiens (Human).